The following is a 349-amino-acid chain: 1-acylglycerol-3-phosphate O-acyltransferase ABHD5 (349 aa).

Ala2 is subject to N-acetylalanine. The AB hydrolase-1 domain maps to 77–185; that stretch reads PLVLLHGFGG…VEPWGFPERP (109 aa). Residues 327 to 332 carry the HXXXXD motif motif; sequence HYVYAD.

It belongs to the peptidase S33 family. ABHD4/ABHD5 subfamily. Interacts with ADRP, PLIN and PNPLA2. Interacts with PLIN5; promotes interaction with PNPLA2.

It localises to the cytoplasm. The protein resides in the lipid droplet. It carries out the reaction a 1-acyl-sn-glycero-3-phosphate + an acyl-CoA = a 1,2-diacyl-sn-glycero-3-phosphate + CoA. The enzyme catalyses 1-(9Z-octadecenoyl)-sn-glycero-3-phosphate + (9Z)-octadecenoyl-CoA = 1,2-di-(9Z-octadecenoyl)-sn-glycero-3-phosphate + CoA. The catalysed reaction is 1-(9Z-octadecenoyl)-sn-glycero-3-phosphate + hexadecanoyl-CoA = 1-(9Z)-octadecenoyl-2-hexadecanoyl-sn-glycero-3-phosphate + CoA. It catalyses the reaction 1-(9Z-octadecenoyl)-sn-glycero-3-phosphate + octadecanoyl-CoA = 1-(9Z-octadecenoyl)-2-octadecanoyl-sn-glycero-3-phosphate + CoA. It carries out the reaction 1-(9Z-octadecenoyl)-sn-glycero-3-phosphate + (5Z,8Z,11Z,14Z)-eicosatetraenoyl-CoA = 1-(9Z)-octadecenoyl-2-(5Z,8Z,11Z,14Z)-eicosatetraenoyl-sn-glycero-3-phosphate + CoA. The enzyme catalyses eicosanoyl-CoA + 1-(9Z-octadecenoyl)-sn-glycero-3-phosphate = 1-(9Z)-octadecenoyl-2-eicosanoyl-sn-glycero-3-phosphate + CoA. The catalysed reaction is 1-hexadecanoyl-sn-glycero-3-phosphate + (9Z)-octadecenoyl-CoA = 1-hexadecanoyl-2-(9Z-octadecenoyl)-sn-glycero-3-phosphate + CoA. It catalyses the reaction 1-octadecanoyl-sn-glycero-3-phosphate + (9Z)-octadecenoyl-CoA = 1-octadecanoyl-2-(9Z-octadecenoyl)-sn-glycero-3-phosphate + CoA. It carries out the reaction 1-(5Z,8Z,11Z,14Z-eicosatetraenoyl)-sn-glycero-3-phosphate + (9Z)-octadecenoyl-CoA = 1-(5Z,8Z,11Z,14Z)-eicosatetraenoyl-2-(9Z)-octadecenoyl-sn-glycero-3-phosphate + CoA. With respect to regulation, acyltransferase activity is inhibited by detergents such as Triton X-100 and 3-[(3-cholamidopropyl)dimethylammonio]-1-propanesulfonate (CHAPS). Acyltransferase activity is inhibited by the presence of magnesium and calcium. In terms of biological role, coenzyme A-dependent lysophosphatidic acid acyltransferase that catalyzes the transfer of an acyl group on a lysophosphatidic acid. Functions preferentially with 1-oleoyl-lysophosphatidic acid followed by 1-palmitoyl-lysophosphatidic acid, 1-stearoyl-lysophosphatidic acid and 1-arachidonoyl-lysophosphatidic acid as lipid acceptor. Functions preferentially with arachidonoyl-CoA followed by oleoyl-CoA as acyl group donors. Functions in phosphatidic acid biosynthesis. May regulate the cellular storage of triacylglycerol through activation of the phospholipase PNPLA2. Involved in keratinocyte differentiation. Regulates lipid droplet fusion. This chain is 1-acylglycerol-3-phosphate O-acyltransferase ABHD5, found in Sus scrofa (Pig).